A 309-amino-acid chain; its full sequence is Agglutinin (309 aa).

Position 1 is an N-acetylmethionine (Met1). Jacalin-type lectin domains follow at residues 4–148 (FLTV…YVKI) and 163–308 (PRGP…HMEY).

It belongs to the jacalin lectin family.

Functionally, D-mannose/D-glucose-binding lectin. Binds N-linked high-mannose-type glycans. Has a preference for smaller (Man(2)-Man(6)) high-mannose-type glycans to larger (Man(7)-Man(9)) ones. Recognizes both alpha1-6 extended and alpha1-3 extended monoantennary glycans. The addition of alpha1-2Man to the Man-alpha1-3Man-beta branch results in a significant loss of affinity, but beta1-2GlcNAc has some affinity. Has less affinity for biantennary glycans, and affinity is very weak for the biantennary complex-type N-glycans with bisecting GlcNAc. No affinity is observed for tri- and tetra-antennary glycans. Has mitogenic and hemagglutinating activities. This chain is Agglutinin, found in Castanea crenata (Japanese chestnut).